We begin with the raw amino-acid sequence, 304 residues long: MHIRILGSAAGGGFPQWNCNCRNCRGVRDGSVAAQPRTQSSIALSDDGERWILCNASPDIRAQIAAFPALQPARRPRDTAIGAIVLLDSQIDHTTGLLSLREGCPHEVWCTQMVHQDLSEGFPLFPMLSHWNGGLRHRPIALDGEPFAIPACPRLRFTAIPLRSSAPPYSPHRGDPHPGDNIGLFVEDLDSAGTLFYAPGLGEVDEALLEWMRRADCLLVDGTLWRDDEMLVCEVGDKLGRQMGHLAQSGPGGMLEVLAKVPAARKVLIHINNTNPILDTASAERAELDASGIEVAWDGMHIQL.

The protein belongs to the PqqB family.

The protein operates within cofactor biosynthesis; pyrroloquinoline quinone biosynthesis. Functionally, may be involved in the transport of PQQ or its precursor to the periplasm. The sequence is that of Coenzyme PQQ synthesis protein B from Pseudomonas aeruginosa (strain UCBPP-PA14).